We begin with the raw amino-acid sequence, 610 residues long: Myoneurin (610 aa).

The region spanning 24–89 (CDCTIVIGEF…IYTGTLNLDS (66 aa)) is the BTB domain. Residues 169–197 (QGALAKKSSQTKKKKKAFNSPKTGQNKTV) form a disordered region. 2 short sequence motifs (nuclear localization signal) span residues 174–190 (KKSS…NSPK) and 257–262 (KRKRGK). Over residues 188–197 (SPKTGQNKTV) the composition is skewed to polar residues. A Phosphoserine modification is found at S289. 8 C2H2-type zinc fingers span residues 302-324 (PMCN…MRIH), 330-352 (YVCH…VRTH), 358-381 (YKCE…RMHH), 387-409 (YKCD…ARKH), 415-437 (YVCD…VRRH), 443-465 (YVCD…SRKH), 471-493 (YICG…FRSH), and 499-522 (FICE…TKVH). A disordered region spans residues 521–556 (VHSGADKTLDSSAEDHTLSEQDSIQKSPLSETMDVK). Residues 523–539 (SGADKTLDSSAEDHTLS) are compositionally biased toward basic and acidic residues. Residues 540–550 (EQDSIQKSPLS) show a composition bias toward polar residues.

It belongs to the krueppel C2H2-type zinc-finger protein family. Mainly expressed in the neuromuscular system. Located in and around synaptic myonuclei in adult muscle. Expression is dysregulated after nerve injury. Also found in the testis, ovary and placenta.

It localises to the nucleus. The polypeptide is Myoneurin (MYNN) (Homo sapiens (Human)).